A 479-amino-acid polypeptide reads, in one-letter code: UDP-N-acetylmuramate--L-alanine ligase (479 aa).

128–134 contacts ATP; it reads GAHGKTT.

The protein belongs to the MurCDEF family.

It localises to the cytoplasm. It carries out the reaction UDP-N-acetyl-alpha-D-muramate + L-alanine + ATP = UDP-N-acetyl-alpha-D-muramoyl-L-alanine + ADP + phosphate + H(+). It participates in cell wall biogenesis; peptidoglycan biosynthesis. Cell wall formation. The polypeptide is UDP-N-acetylmuramate--L-alanine ligase (Psychrobacter arcticus (strain DSM 17307 / VKM B-2377 / 273-4)).